A 274-amino-acid polypeptide reads, in one-letter code: Transcription factor MYB32 (274 aa).

HTH myb-type domains are found at residues 9–61 and 62–116; these read KDHT…INYL and RPDL…KRKL. DNA-binding regions (H-T-H motif) lie at residues 37–61 and 89–112; these read WRSLPRSAGLQRCGKSCRLRWINYL and WSLIATRLPGRTDNEIKNYWNTHV. The tract at residues 123–144 is disordered; sequence PATHRPINETKTSQDSSDSSKT.

In terms of tissue distribution, mostly expressed in roots, and, to a lower extent, in stems, flower buds, and siliques.

Its subcellular location is the nucleus. This is Transcription factor MYB32 (MYB32) from Arabidopsis thaliana (Mouse-ear cress).